A 265-amino-acid polypeptide reads, in one-letter code: Putative 2-aminoethylphosphonate transport system permease protein PhnV (265 aa).

6 helical membrane-spanning segments follow: residues Gly-13–Met-33, Leu-69–Ala-89, Val-104–Phe-124, Met-131–Phe-151, Leu-185–Gly-205, and Asn-233–Met-253. One can recognise an ABC transmembrane type-1 domain in the interval Leu-65–Met-253.

Belongs to the binding-protein-dependent transport system permease family.

Its subcellular location is the cell inner membrane. Its function is as follows. Probably part of the PhnSTUV complex (TC 3.A.1.11.5) involved in 2-aminoethylphosphonate import. Probably responsible for the translocation of the substrate across the membrane. The polypeptide is Putative 2-aminoethylphosphonate transport system permease protein PhnV (phnV) (Salmonella typhimurium (strain LT2 / SGSC1412 / ATCC 700720)).